Reading from the N-terminus, the 406-residue chain is RILP-like protein 1 (406 aa).

Serine 7 carries the post-translational modification Phosphoserine. The RH1 domain occupies 10–97 (AALSALEKNV…RVERMDRIEK (88 aa)). S-nitrosocysteine is present on cysteine 47. Residues 76 to 258 (ELDELRLELD…KLRERLQGEH (183 aa)) adopt a coiled-coil conformation. Disordered stretches follow at residues 255–280 (QGEH…ESIS) and 330–354 (EIEE…QPES). Serine 259 is modified (phosphoserine). The span at 262–280 (GEEEEAEIPPQPDGEESIS) shows a compositional bias: acidic residues. The RH2 domain occupies 294-359 (RPRFTLQELR…PQPESGIKRL (66 aa)).

The protein belongs to the RILPL family. In terms of assembly, interacts (when S-nitrosylated) with GAPDH. Interacts with RAB8A; interaction is dependent on the phosphorylation of 'Thr-72' of RAB8A. Interacts with RAB10 and RAB12; the interaction is dependent on the phosphorylation of 'Thr-73' of RAB10, and 'Ser-105' of RAB12. S-nitrosylation is required for the interaction with GAPDH. In terms of tissue distribution, highly expressed in heart, skeletal muscle, brain and lung (at protein level).

It is found in the cytoplasm. It localises to the cytosol. The protein localises to the cytoskeleton. The protein resides in the microtubule organizing center. Its subcellular location is the centrosome. It is found in the centriole. It localises to the cilium basal body. Its function is as follows. Plays a role in the regulation of cell shape and polarity. Plays a role in cellular protein transport, including protein transport away from primary cilia. Neuroprotective protein, which acts by sequestring GAPDH in the cytosol and prevent the apoptotic function of GAPDH in the nucleus. Competes with SIAH1 for binding GAPDH. Does not regulate lysosomal morphology and distribution. Binds to RAB10 following LRRK2-mediated RAB10 phosphorylation which leads to inhibition of ciliogenesis. In Rattus norvegicus (Rat), this protein is RILP-like protein 1 (Rilpl1).